Here is a 346-residue protein sequence, read N- to C-terminus: D-fructose 1,6-bisphosphatase class 2/sedoheptulose 1,7-bisphosphatase 1 (346 aa).

Positions 33, 57, 97, and 100 each coordinate Mn(2+). Substrate contacts are provided by residues 100–102 (EGT), Y131, 176–178 (RAR), and 198–200 (DGD). E225 provides a ligand contact to Mn(2+).

Belongs to the FBPase class 2 family. As to quaternary structure, homotetramer. Requires Mn(2+) as cofactor.

The enzyme catalyses beta-D-fructose 1,6-bisphosphate + H2O = beta-D-fructose 6-phosphate + phosphate. The catalysed reaction is D-sedoheptulose 1,7-bisphosphate + H2O = D-sedoheptulose 7-phosphate + phosphate. The protein operates within carbohydrate biosynthesis; Calvin cycle. In terms of biological role, catalyzes the hydrolysis of fructose 1,6-bisphosphate (Fru 1,6-P2) and sedoheptulose 1,7-bisphosphate (Sed 1,7-P2) to fructose 6-phosphate and sedoheptulose 7-phosphate, respectively. This Acaryochloris marina (strain MBIC 11017) protein is D-fructose 1,6-bisphosphatase class 2/sedoheptulose 1,7-bisphosphatase 1.